A 161-amino-acid chain; its full sequence is MKRFSDKRTQIKTVMATGTFDIIHPGHGFFLEEAKKLGGENARLVVVLARDSTVRARKRTPIIGEKQRLEVVMMLKPVDEAYLGSETDMFEIVHRLKPDIIAIGPDQKFDIDELRDELRRRGLECEVKRVGKYRRSELDSTCKIIKKIRKMEFDEDALKNC.

ATP is bound by residues 19–20, 24–27, D106, and Y133; these read TF and HPGH.

This sequence belongs to the archaeal FAD synthase family. As to quaternary structure, homodimer. A divalent metal cation serves as cofactor.

The enzyme catalyses FMN + ATP + H(+) = FAD + diphosphate. It participates in cofactor biosynthesis; FAD biosynthesis; FAD from FMN: step 1/1. Catalyzes the transfer of the AMP portion of ATP to flavin mononucleotide (FMN) to produce flavin adenine dinucleotide (FAD) coenzyme. The chain is FAD synthase from Methanothermobacter marburgensis (strain ATCC BAA-927 / DSM 2133 / JCM 14651 / NBRC 100331 / OCM 82 / Marburg) (Methanobacterium thermoautotrophicum).